The following is a 437-amino-acid chain: Phosphomethylpyrimidine synthase (437 aa).

Substrate-binding positions include N69, M98, Y127, H163, 185-187 (SRG), 226-229 (DACR), and E265. H269 serves as a coordination point for Zn(2+). Substrate is bound at residue Y292. Residue H333 coordinates Zn(2+). C409, C412, and C416 together coordinate [4Fe-4S] cluster.

This sequence belongs to the ThiC family. Requires [4Fe-4S] cluster as cofactor.

The catalysed reaction is 5-amino-1-(5-phospho-beta-D-ribosyl)imidazole + S-adenosyl-L-methionine = 4-amino-2-methyl-5-(phosphooxymethyl)pyrimidine + CO + 5'-deoxyadenosine + formate + L-methionine + 3 H(+). The protein operates within cofactor biosynthesis; thiamine diphosphate biosynthesis. In terms of biological role, catalyzes the synthesis of the hydroxymethylpyrimidine phosphate (HMP-P) moiety of thiamine from aminoimidazole ribotide (AIR) in a radical S-adenosyl-L-methionine (SAM)-dependent reaction. The chain is Phosphomethylpyrimidine synthase from Clostridium novyi (strain NT).